The following is a 151-amino-acid chain: Allatostatin-A (151 aa).

Positions 1 to 21 (MNSLHAHLLLLAVCCVGYIAS) are cleaved as a signal peptide. Residues 22 to 54 (SPVIGQDQRSGDSDADVLLAADEMADNGGDNID) constitute a propeptide that is removed on maturation. Leu64, Leu88, and Leu99 each carry leucine amide. Positions 103-135 (SDYDYDQDNEIDYRVPPANYLAAERAVRPGRQN) are excised as a propeptide. Residues 131–151 (PGRQNKRTTRPQPFNFGLGRR) are disordered. Leu148 bears the Leucine amide mark.

Belongs to the allatostatin family.

It is found in the secreted. In terms of biological role, may act as a neurotransmitter or neuromodulator. In Drosophila melanogaster (Fruit fly), this protein is Allatostatin-A (AstA).